Consider the following 116-residue polypeptide: Protein Wnt-5b (116 aa).

A lipid anchor (O-palmitoleoyl serine; by PORCN) is attached at serine 1. Residues asparagine 69 and asparagine 83 are each glycosylated (N-linked (GlcNAc...) asparagine). The cysteines at positions 82 and 97 are disulfide-linked.

Belongs to the Wnt family. Palmitoleoylation is required for efficient binding to frizzled receptors. Depalmitoleoylation leads to Wnt signaling pathway inhibition.

It is found in the secreted. Its subcellular location is the extracellular space. The protein resides in the extracellular matrix. Functionally, ligand for members of the frizzled family of seven transmembrane receptors. Probable developmental protein. May be a signaling molecule which affects the development of discrete regions of tissues. Is likely to signal over only few cell diameters. This is Protein Wnt-5b (WNT-5B) from Plethodon jordani (Red-cheeked salamander).